The following is a 210-amino-acid chain: dTTP/UTP pyrophosphatase (210 aa).

Catalysis depends on D89, which acts as the Proton acceptor.

Belongs to the Maf family. YhdE subfamily. Requires a divalent metal cation as cofactor.

The protein localises to the cytoplasm. The enzyme catalyses dTTP + H2O = dTMP + diphosphate + H(+). It catalyses the reaction UTP + H2O = UMP + diphosphate + H(+). In terms of biological role, nucleoside triphosphate pyrophosphatase that hydrolyzes dTTP and UTP. May have a dual role in cell division arrest and in preventing the incorporation of modified nucleotides into cellular nucleic acids. The sequence is that of dTTP/UTP pyrophosphatase from Burkholderia orbicola (strain AU 1054).